The primary structure comprises 114 residues: Gas vesicle protein J (114 aa).

Residues 63-114 (PTGTDMERVEEAAGISPDESRSLDTRSESEQMDELPGEAGASVSNTAPQEEE) form a disordered region. The span at 80-91 (DESRSLDTRSES) shows a compositional bias: basic and acidic residues. The span at 104–114 (SVSNTAPQEEE) shows a compositional bias: polar residues.

It belongs to the gas vesicle GvpA family. GvpF to GvpM interact with each other in vitro, and may form multi-subunit complex(es). Interacts with GvpA.

The protein localises to the gas vesicle. In terms of biological role, a minor component of the gas vesicle, proteins GvpF to GvpM might be involved in nucleating gas vesicle formation. Gas vesicles are hollow, gas filled proteinaceous nanostructures found in some microorganisms. They allow positioning of halobacteria at the optimal depth for growth in the poorly aerated, shallow brine pools of their habitat. Its function is as follows. Expression of a 9.5 kb mc-vac DNA fragment containing 2 divergently transcribed regions (gvpD-gvpE-gvpF-gvpG-gvpH-gvpI-gvpJ-gvpK-gvpL-gvpM and gvpA-gvpC-gvpN-gvpO) allows H.volcanii to produce gas vesicles. The sequence is that of Gas vesicle protein J from Haloferax mediterranei (strain ATCC 33500 / DSM 1411 / JCM 8866 / NBRC 14739 / NCIMB 2177 / R-4) (Halobacterium mediterranei).